A 223-amino-acid chain; its full sequence is Ribonuclease T (223 aa).

The 175-residue stretch at 20 to 194 (VVIDVETAGF…YDTNQTALLF (175 aa)) folds into the Exonuclease domain. Mg(2+) is bound by residues aspartate 23, glutamate 25, histidine 181, and aspartate 186. The active-site Proton donor/acceptor is histidine 181.

The protein belongs to the RNase T family. In terms of assembly, homodimer. Requires Mg(2+) as cofactor.

Trims short 3' overhangs of a variety of RNA species, leaving a one or two nucleotide 3' overhang. Responsible for the end-turnover of tRNA: specifically removes the terminal AMP residue from uncharged tRNA (tRNA-C-C-A). Also appears to be involved in tRNA biosynthesis. The chain is Ribonuclease T from Pectobacterium atrosepticum (strain SCRI 1043 / ATCC BAA-672) (Erwinia carotovora subsp. atroseptica).